The following is a 571-amino-acid chain: DDB1- and CUL4-associated factor 11 homolog (571 aa).

Residues 51-75 (RMKPNHSNDSDTDFSSDDEGCPKMT) form a disordered region. Residues 60-69 (SDTDFSSDDE) show a composition bias toward acidic residues. WD repeat units lie at residues 162-201 (RVAT…SKYR), 266-305 (RDHC…RIRT), 309-349 (AHED…DGDV), 357-396 (GHRD…NMSG), 435-479 (GHSV…VSRR), and 482-521 (GHTA…EGVI).

The protein belongs to the WD repeat LEC14B family.

Functionally, involved in regulation of lifespan. Required for dopaminergic CEP neuron degeneration in response to Mn(2+). Inhibits the skn-1-mediated up-regulation of tatn-1. The protein is DDB1- and CUL4-associated factor 11 homolog of Caenorhabditis elegans.